Here is a 360-residue protein sequence, read N- to C-terminus: Alpha-2-macroglobulin receptor-associated protein (360 aa).

A signal peptide spans 1 to 28 (MAPRRERVSTLPRLQLLVLLLLPLMLVP). Phosphoserine occurs at positions 53 and 138. Positions 184 to 302 (EKIQEYNVLL…KHNHYQKQLE (119 aa)) form a coiled coil. Positions 240–356 (RLRKVSHQGY…DLSSRVSRAR (117 aa)) are LDL receptor binding. N-linked (GlcNAc...) asparagine glycosylation occurs at asparagine 271. Residues 357–360 (HNEL) carry the Prevents secretion from ER motif.

It belongs to the alpha-2-MRAP family. Interacts with the LRP1/alpha-2-macroglobulin receptor heavy and light chains; the interaction is transient and coincides with a reduction of ligand binding by the receptor. Interacts with LRP2/glycoprotein 330. Interacts with LRP1B; binding is followed by internalization and degradation. Interacts with LDLR. Interacts with SORL1. Interacts with LRP1; this interaction is followed by rapid internalization. Post-translationally, N-glycosylated. As to expression, highly expressed in PYS-2 parietal endoderm cells and in the kidney. The RNA level increased about 10-fold during differentiation of F9 embryonal carcinoma cells to parietal endoderm cells.

It is found in the rough endoplasmic reticulum lumen. The protein localises to the endoplasmic reticulum-Golgi intermediate compartment lumen. The protein resides in the golgi apparatus. It localises to the cis-Golgi network. Its subcellular location is the golgi apparatus lumen. It is found in the endosome lumen. The protein localises to the cell surface. Its function is as follows. Molecular chaperone for LDL receptor-related proteins that may regulate their ligand binding activity along the secretory pathway. This chain is Alpha-2-macroglobulin receptor-associated protein (Lrpap1), found in Mus musculus (Mouse).